The primary structure comprises 80 residues: U-Asilidin(1)-Dg12 (80 aa).

The N-terminal stretch at 1 to 24 (MARLLVVSVGVFLAVIMLSSETMS) is a signal peptide. A propeptide spanning residues 25–46 (LPAGENLPALTLFEAQNQLIGL) is cleaved from the precursor. 3 cysteine pairs are disulfide-bonded: Cys-53/Cys-67, Cys-60/Cys-71, and Cys-66/Cys-78.

Belongs to the asilidin-1 family. In terms of tissue distribution, expressed by the venom gland.

It is found in the secreted. Neurotoxin that may modulate ions channels (other than those tested). In vivo, induces neurotoxic effects when injected into insects (tested on L.cuprina and A.domesticus). This is U-Asilidin(1)-Dg12 from Dolopus genitalis (Giant Australian assassin fly).